A 696-amino-acid polypeptide reads, in one-letter code: Polyribonucleotide nucleotidyltransferase (696 aa).

Positions 486 and 492 each coordinate Mg(2+). One can recognise a KH domain in the interval 553 to 612; it reads PRIIVRNIPKDRIGELIGPGGKNVRGISELTGAELYIEDDGRVTISGSNQESAEKAAKMV. Positions 622–690 constitute an S1 motif domain; sequence GKIYEGKVKR…KTGKIDLSRK (69 aa).

It belongs to the polyribonucleotide nucleotidyltransferase family. Requires Mg(2+) as cofactor.

It localises to the cytoplasm. It catalyses the reaction RNA(n+1) + phosphate = RNA(n) + a ribonucleoside 5'-diphosphate. Involved in mRNA degradation. Catalyzes the phosphorolysis of single-stranded polyribonucleotides processively in the 3'- to 5'-direction. The chain is Polyribonucleotide nucleotidyltransferase from Leptospira borgpetersenii serovar Hardjo-bovis (strain L550).